Here is a 185-residue protein sequence, read N- to C-terminus: Ribosome-recycling factor (185 aa).

Residues 131-155 are compositionally biased toward basic and acidic residues; it reads DRKNANDKIKKSEKDKEITADESKS. The tract at residues 131–156 is disordered; the sequence is DRKNANDKIKKSEKDKEITADESKSA.

The protein belongs to the RRF family.

Its subcellular location is the cytoplasm. Responsible for the release of ribosomes from messenger RNA at the termination of protein biosynthesis. May increase the efficiency of translation by recycling ribosomes from one round of translation to another. The protein is Ribosome-recycling factor of Sulfurimonas denitrificans (strain ATCC 33889 / DSM 1251) (Thiomicrospira denitrificans (strain ATCC 33889 / DSM 1251)).